Here is a 289-residue protein sequence, read N- to C-terminus: Homeobox protein engrailed-2 (289 aa).

Basic and acidic residues-rich tracts occupy residues 1-12 and 60-83; these read MEEGGRSPREEA and EFGR…ESRR. 2 disordered regions span residues 1-166 and 179-206; these read MEEG…GNQP and SDRP…PRTA. Positions 96–114 are enriched in gly residues; it reads VPGGGGGGGGGSPGRGEGG. Positions 142-160 are enriched in low complexity; it reads LSGAELSVSSDSDSSQAGS. Residues 200-259 constitute a DNA-binding region (homeobox); it reads DKRPRTAFTAEQLQRLKAEFQTNRYLTEQRRQSLAQELGLNESQIKIWFQNKRAKIKKAT.

The protein belongs to the engrailed homeobox family.

The protein localises to the nucleus. The polypeptide is Homeobox protein engrailed-2 (EN2) (Gallus gallus (Chicken)).